The sequence spans 190 residues: TATA box-binding protein-like 1 (190 aa).

This sequence belongs to the TBP family. As to quaternary structure, binds TFIIA and TFIIB.

Its subcellular location is the cytoplasm. It is found in the nucleus. Part of a specialized transcription system that mediates the transcription of most ribosomal proteins through the 5'-TCT-3' motif which is a core promoter element at these genes. Seems to also mediate the transcription of NF1. Does not bind the TATA box. The sequence is that of TATA box-binding protein-like 1 (TBPL1) from Pongo abelii (Sumatran orangutan).